We begin with the raw amino-acid sequence, 1140 residues long: Condensin-2 complex subunit G2 (1140 aa).

The HEAT repeat unit spans residues 460-493 (LLPALKSSLHDSSEKVRVAFVGMLLKIKAARAAK).

As to quaternary structure, component of the condensin-2 complex, which contains the smc2 and smc4 heterodimer, and three non SMC subunits that probably regulate the complex: ncaph2, ncapd3 and ncapg2.

It is found in the nucleus. Functionally, regulatory subunit of the condensin-2 complex, a complex which establishes mitotic chromosome architecture and is involved in physical rigidity of the chromatid axis. Plays a role in the embryonic development of the head and kidney structures. The sequence is that of Condensin-2 complex subunit G2 from Danio rerio (Zebrafish).